The following is an 856-amino-acid chain: DNA mismatch repair protein MutS (856 aa).

607-614 (GPNMSGKS) serves as a coordination point for ATP.

This sequence belongs to the DNA mismatch repair MutS family.

Its function is as follows. This protein is involved in the repair of mismatches in DNA. It is possible that it carries out the mismatch recognition step. This protein has a weak ATPase activity. The sequence is that of DNA mismatch repair protein MutS from Lactobacillus delbrueckii subsp. bulgaricus (strain ATCC BAA-365 / Lb-18).